Reading from the N-terminus, the 154-residue chain is Xanthine-guanine phosphoribosyltransferase (154 aa).

5-phospho-alpha-D-ribose 1-diphosphate-binding positions include 37–38 (RG), Arg-69, and 88–96 (EDLVDSGDT). Residue Arg-69 participates in GMP binding. A Mg(2+)-binding site is contributed by Asp-89. Guanine is bound by residues Asp-92 and Ile-135. 2 residues coordinate xanthine: Asp-92 and Ile-135. Residues 92–96 (DSGDT) and 134–135 (WI) each bind GMP.

It belongs to the purine/pyrimidine phosphoribosyltransferase family. XGPT subfamily. As to quaternary structure, homotetramer. Requires Mg(2+) as cofactor.

It localises to the cell inner membrane. It catalyses the reaction GMP + diphosphate = guanine + 5-phospho-alpha-D-ribose 1-diphosphate. It carries out the reaction XMP + diphosphate = xanthine + 5-phospho-alpha-D-ribose 1-diphosphate. The enzyme catalyses IMP + diphosphate = hypoxanthine + 5-phospho-alpha-D-ribose 1-diphosphate. Its pathway is purine metabolism; GMP biosynthesis via salvage pathway; GMP from guanine: step 1/1. It functions in the pathway purine metabolism; XMP biosynthesis via salvage pathway; XMP from xanthine: step 1/1. Functionally, purine salvage pathway enzyme that catalyzes the transfer of the ribosyl-5-phosphate group from 5-phospho-alpha-D-ribose 1-diphosphate (PRPP) to the N9 position of the 6-oxopurines guanine and xanthine to form the corresponding ribonucleotides GMP (guanosine 5'-monophosphate) and XMP (xanthosine 5'-monophosphate), with the release of PPi. To a lesser extent, also acts on hypoxanthine. The chain is Xanthine-guanine phosphoribosyltransferase from Vibrio vulnificus (strain CMCP6).